Here is a 159-residue protein sequence, read N- to C-terminus: Transcription elongation factor GreA (159 aa).

This sequence belongs to the GreA/GreB family.

Its function is as follows. Necessary for efficient RNA polymerase transcription elongation past template-encoded arresting sites. The arresting sites in DNA have the property of trapping a certain fraction of elongating RNA polymerases that pass through, resulting in locked ternary complexes. Cleavage of the nascent transcript by cleavage factors such as GreA or GreB allows the resumption of elongation from the new 3'terminus. GreA releases sequences of 2 to 3 nucleotides. This chain is Transcription elongation factor GreA, found in Orientia tsutsugamushi (strain Ikeda) (Rickettsia tsutsugamushi).